The chain runs to 75 residues: MQCVCLCVFVLLLAGCVTSQEEVEVDCYCVYFKYDCPEDYIESNRYNNQCQIRHKCCVPPPKYFFFVFPKGYRMP.

The first 19 residues, M1–S19, serve as a signal peptide directing secretion.

Nacreous layer of shell (at protein level).

Its subcellular location is the secreted. This is an uncharacterized protein from Margaritifera margaritifera (Freshwater pearl mussel).